A 534-amino-acid polypeptide reads, in one-letter code: DM7 family protein GE17491 (534 aa).

The protein belongs to the DM7 family.

In Drosophila yakuba (Fruit fly), this protein is DM7 family protein GE17491.